The primary structure comprises 889 residues: Alanine--tRNA ligase (889 aa).

Zn(2+) is bound by residues H564, H568, C677, and H681.

This sequence belongs to the class-II aminoacyl-tRNA synthetase family. Zn(2+) serves as cofactor.

Its subcellular location is the cytoplasm. The enzyme catalyses tRNA(Ala) + L-alanine + ATP = L-alanyl-tRNA(Ala) + AMP + diphosphate. Functionally, catalyzes the attachment of alanine to tRNA(Ala) in a two-step reaction: alanine is first activated by ATP to form Ala-AMP and then transferred to the acceptor end of tRNA(Ala). Also edits incorrectly charged Ser-tRNA(Ala) and Gly-tRNA(Ala) via its editing domain. The polypeptide is Alanine--tRNA ligase (Rhodopseudomonas palustris (strain ATCC BAA-98 / CGA009)).